The primary structure comprises 502 residues: ATP synthase subunit alpha, chloroplastic (502 aa).

170–177 (GDRQTGKT) is an ATP binding site.

It belongs to the ATPase alpha/beta chains family. In terms of assembly, F-type ATPases have 2 components, CF(1) - the catalytic core - and CF(0) - the membrane proton channel. CF(1) has five subunits: alpha(3), beta(3), gamma(1), delta(1), epsilon(1). CF(0) has four main subunits: a, b, b' and c.

Its subcellular location is the plastid. The protein resides in the chloroplast thylakoid membrane. It carries out the reaction ATP + H2O + 4 H(+)(in) = ADP + phosphate + 5 H(+)(out). Its function is as follows. Produces ATP from ADP in the presence of a proton gradient across the membrane. The alpha chain is a regulatory subunit. The sequence is that of ATP synthase subunit alpha, chloroplastic from Tupiella akineta (Green alga).